The following is a 671-amino-acid chain: Preterminal protein (671 aa).

Positions 380–389 (RLPVRRRRRR) match the Nuclear localization signal motif. The segment at 386–411 (RRRRVPPPPPPPEEEEGEALMEEEIE) is disordered. The segment covering 397 to 411 (PEEEEGEALMEEEIE) has biased composition (acidic residues). S580 bears the O-(5'-phospho-DNA)-serine mark. The interval 645-671 (GADVPLPPLPAGPEPPLPPGARPRHRF) is disordered. A compositionally biased stretch (pro residues) spans 649 to 665 (PLPPLPAGPEPPLPPGA).

It belongs to the adenoviridae terminal protein family. In terms of assembly, heterodimer with the polymerase; this heterodimer binds to bp 9 to 18 of the genome. Interacts with host POU2F1; POU2F1 binds to the auxiliary sequences in the inverted terminal repeats and tethers the pTP-POL heterodimer to the origin DNA thereby participating in the assembly of the pre-initiation complex (POL-TP-DBP-NFIA-POU2F1). In terms of processing, preterminal protein is used to replicate viral genome, upon genomic encapsidation it is processed first into iTP and finally into TP by adenovirus protease.

The protein localises to the host nucleus matrix. Protein covalently bound to the viral DNA that acts as a primer for viral genomic replication by DNA strand displacement. Assembles on the viral origin of replication in an initiation complex with viral polymerase, DBP, host NFIA and host POU2F1/OCT1. During initiation, the polymerase covalently couples the first dCTP with Ser-580 of pTP. The terminal protein stimulates the template activity over 20 fold compared to protein-free templates. Neo-synthesized viral genomes are linked to two preterminal proteins, one for each 5' end. These new genomes are encapsidated in the nucleus, and during capsid maturation by viral protease, preterminal protein is first cleaved into intermediary (iTP), then into mature TP. May play a role in host nuclear matrix localization of genomic DNA. This chain is Preterminal protein, found in Human adenovirus C serotype 5 (HAdV-5).